The primary structure comprises 75 residues: MSAEEQEEGGATPAEVIEVVGETGMHGEAMQVKCRIQEGENQGRIIARNVLGPVRVGDVIQLRETAREADSIGGQ.

It belongs to the eukaryotic ribosomal protein eS28 family.

This chain is Small ribosomal subunit protein eS28, found in Natronomonas pharaonis (strain ATCC 35678 / DSM 2160 / CIP 103997 / JCM 8858 / NBRC 14720 / NCIMB 2260 / Gabara) (Halobacterium pharaonis).